A 633-amino-acid polypeptide reads, in one-letter code: MVSHQFLPYLDYIKICLASPERIRVWAQRILPNGQIVGEVTKPETINYRTLKPEMDGLFCERIFGPIKNWECHCGKYKRIKDKGIICERCGVEVTESKVRRHRMGYIELSAPVVHIWYLKGMPSYISVFLDMAAKEIEQVVYFNTYIITHSTAENKQIKYKQLLTEDEWVLIEDQIYRNEIQGEIEIGIGASAILKMLKDLDLSLESDLLRTKLVNLKAVKKDKIMKRLRIIDNFMVTGASPSWMVLNVIPVISPDLRPMVQLDGGRFATSDLNDLYRRVINRNNRLKRLEEILAPEIIIRNEKRMLQEAVDALIDNGRRGRVVVGANNRALKSLSNIIEGKQGRFRQNLLGKRVDYSGRSVIVVGPDLKLNECGIPKEMAIELFQPFLIHQIIKEGLANNMKSAKKLMQKHTSVTIELLQKIIKWHPVLLNRAPTLHRLGIQAFDPVLVDGRAIRLHPLVCPAFNADFDGDQMAVHIPLSIEAQTEARLLMLAPNNFLSPATGQPIITPSQDMVLGCYYLTNNNLANQKGSGHYFSSFEDAIIAYKQKLISLHAFIWVKFYGTINNLDIGRFIKSTLCKNKLTTTDYYENLQVKKDIEGTITCQFIKTSVGRIFFNIAISGNLFFSTSNHNK.

The Zn(2+) site is built by Cys72, Cys74, Cys87, and Cys90. Positions 468, 470, and 472 each coordinate Mg(2+).

This sequence belongs to the RNA polymerase beta' chain family. RpoC1 subfamily. As to quaternary structure, in plastids the minimal PEP RNA polymerase catalytic core is composed of four subunits: alpha, beta, beta', and beta''. When a (nuclear-encoded) sigma factor is associated with the core the holoenzyme is formed, which can initiate transcription. The cofactor is Mg(2+). Zn(2+) serves as cofactor.

It localises to the plastid. The protein resides in the chloroplast. The catalysed reaction is RNA(n) + a ribonucleoside 5'-triphosphate = RNA(n+1) + diphosphate. Functionally, DNA-dependent RNA polymerase catalyzes the transcription of DNA into RNA using the four ribonucleoside triphosphates as substrates. The polypeptide is DNA-directed RNA polymerase subunit beta' (Cyanidium caldarium (Red alga)).